The sequence spans 476 residues: Sulfate adenylyltransferase subunit 1 (476 aa).

The tr-type G domain occupies 24 to 239 (KSLLRFLTCG…LLETVDVDYE (216 aa)). The interval 33-40 (GSVDDGKS) is G1. A GTP-binding site is contributed by 33–40 (GSVDDGKS). Residues 91-95 (GITID) are G2. Positions 112 to 115 (DTPG) are G3. Residues 112–116 (DTPGH) and 167–170 (NKMD) contribute to the GTP site. The tract at residues 167-170 (NKMD) is G4. The tract at residues 205–207 (SAL) is G5.

It belongs to the TRAFAC class translation factor GTPase superfamily. Classic translation factor GTPase family. CysN/NodQ subfamily. As to quaternary structure, heterodimer composed of CysD, the smaller subunit, and CysN.

It carries out the reaction sulfate + ATP + H(+) = adenosine 5'-phosphosulfate + diphosphate. It participates in sulfur metabolism; hydrogen sulfide biosynthesis; sulfite from sulfate: step 1/3. Functionally, with CysD forms the ATP sulfurylase (ATPS) that catalyzes the adenylation of sulfate producing adenosine 5'-phosphosulfate (APS) and diphosphate, the first enzymatic step in sulfur assimilation pathway. APS synthesis involves the formation of a high-energy phosphoric-sulfuric acid anhydride bond driven by GTP hydrolysis by CysN coupled to ATP hydrolysis by CysD. The protein is Sulfate adenylyltransferase subunit 1 of Vibrio parahaemolyticus serotype O3:K6 (strain RIMD 2210633).